We begin with the raw amino-acid sequence, 215 residues long: Phosphatidylserine decarboxylase proenzyme (215 aa).

Ser-184 acts as the Schiff-base intermediate with substrate; via pyruvic acid in catalysis. The residue at position 184 (Ser-184) is a Pyruvic acid (Ser); by autocatalysis.

This sequence belongs to the phosphatidylserine decarboxylase family. PSD-A subfamily. In terms of assembly, heterodimer of a large membrane-associated beta subunit and a small pyruvoyl-containing alpha subunit. Requires pyruvate as cofactor. In terms of processing, is synthesized initially as an inactive proenzyme. Formation of the active enzyme involves a self-maturation process in which the active site pyruvoyl group is generated from an internal serine residue via an autocatalytic post-translational modification. Two non-identical subunits are generated from the proenzyme in this reaction, and the pyruvate is formed at the N-terminus of the alpha chain, which is derived from the carboxyl end of the proenzyme. The post-translation cleavage follows an unusual pathway, termed non-hydrolytic serinolysis, in which the side chain hydroxyl group of the serine supplies its oxygen atom to form the C-terminus of the beta chain, while the remainder of the serine residue undergoes an oxidative deamination to produce ammonia and the pyruvoyl prosthetic group on the alpha chain.

It is found in the cell membrane. It catalyses the reaction a 1,2-diacyl-sn-glycero-3-phospho-L-serine + H(+) = a 1,2-diacyl-sn-glycero-3-phosphoethanolamine + CO2. It participates in phospholipid metabolism; phosphatidylethanolamine biosynthesis; phosphatidylethanolamine from CDP-diacylglycerol: step 2/2. In terms of biological role, catalyzes the formation of phosphatidylethanolamine (PtdEtn) from phosphatidylserine (PtdSer). The protein is Phosphatidylserine decarboxylase proenzyme of Aromatoleum aromaticum (strain DSM 19018 / LMG 30748 / EbN1) (Azoarcus sp. (strain EbN1)).